The chain runs to 65 residues: uncharacterized protein (65 aa).

The Cytoplasmic segment spans residues 1 to 20 (MRFSNCFNKFKFCIGTEKKY). Residues 21–43 (SFPICTSTYTSFSLFACIWSIFI) form a helical membrane-spanning segment. At 44 to 65 (HISLNKSFIYQKSWYYSFFQNR) the chain is on the extracellular side.

The protein localises to the host membrane. This is an uncharacterized protein from Acidianus sp. F28 (AFV-2).